The chain runs to 1024 residues: Beta-galactosidase 2 (1024 aa).

The substrate site is built by asparagine 103 and aspartate 202. Position 202 (aspartate 202) interacts with Na(+). Glutamate 417, histidine 419, and glutamate 462 together coordinate Mg(2+). Residues glutamate 462 and 538 to 541 (EYAH) contribute to the substrate site. Glutamate 462 (proton donor) is an active-site residue. Glutamate 538 serves as the catalytic Nucleophile. Asparagine 598 contributes to the Mg(2+) binding site. Positions 602 and 605 each coordinate Na(+). Positions 605 and 1000 each coordinate substrate.

Belongs to the glycosyl hydrolase 2 family. Homotetramer. Mg(2+) serves as cofactor. Requires Na(+) as cofactor.

It carries out the reaction Hydrolysis of terminal non-reducing beta-D-galactose residues in beta-D-galactosides.. The sequence is that of Beta-galactosidase 2 from Klebsiella pneumoniae subsp. pneumoniae (strain ATCC 700721 / MGH 78578).